The primary structure comprises 301 residues: Negative regulator of the PHO system (301 aa).

The region spanning 7 to 297 is the Protein kinase domain; it reads FKQLERLGNG…AQQALSHPLF (291 aa). ATP is bound by residues 13 to 21 and Lys-36; that span reads LGNGTYATV. Catalysis depends on Asp-133, which acts as the Proton acceptor.

The protein belongs to the protein kinase superfamily. CMGC Ser/Thr protein kinase family. CDC2/CDKX subfamily. In terms of assembly, interacts with a number of cyclins.

The enzyme catalyses L-seryl-[protein] + ATP = O-phospho-L-seryl-[protein] + ADP + H(+). It carries out the reaction L-threonyl-[protein] + ATP = O-phospho-L-threonyl-[protein] + ADP + H(+). In terms of biological role, when phosphate concentrations are high it phosphorylates the PHO4 transcription factor thus establishing repression. The protein is Negative regulator of the PHO system (PHO85) of Eremothecium gossypii (strain ATCC 10895 / CBS 109.51 / FGSC 9923 / NRRL Y-1056) (Yeast).